The primary structure comprises 344 residues: Nicotinate-nucleotide--dimethylbenzimidazole phosphoribosyltransferase (344 aa).

The active-site Proton acceptor is the E310.

This sequence belongs to the CobT family.

The enzyme catalyses 5,6-dimethylbenzimidazole + nicotinate beta-D-ribonucleotide = alpha-ribazole 5'-phosphate + nicotinate + H(+). It participates in nucleoside biosynthesis; alpha-ribazole biosynthesis; alpha-ribazole from 5,6-dimethylbenzimidazole: step 1/2. Functionally, catalyzes the synthesis of alpha-ribazole-5'-phosphate from nicotinate mononucleotide (NAMN) and 5,6-dimethylbenzimidazole (DMB). In Chromobacterium violaceum (strain ATCC 12472 / DSM 30191 / JCM 1249 / CCUG 213 / NBRC 12614 / NCIMB 9131 / NCTC 9757 / MK), this protein is Nicotinate-nucleotide--dimethylbenzimidazole phosphoribosyltransferase.